The primary structure comprises 551 residues: Scaffold protein OPG125 (551 aa).

Belongs to the orthopoxvirus protein OPG125 family. Homotrimer. Self-assembles to form a layer. Interacts with OPG158 (via N-terminus); this interaction is necessary for OPG125 association with membranes.

Its subcellular location is the membrane. Scaffold protein which forms a transitory spherical honeycomb lattice providing curvature and rigidity to the convex membrane of crescent and immature virions (IV). This association occurs concomitantly with viral membrane formation. Targeted by the drug rifampicin, which prevents the formation of this lattice, and hence virus morphogenesis. In the presence of rifampicin, irregularly shaped membranes that lack the honeycomb layer accumulate around areas of electron-dense viroplasm. This layer is lost from virions during maturation from IV to mature virion (MV), through the proteolysis of OPG158 N-terminus. The sequence is that of Scaffold protein OPG125 (OPG125) from Vaccinia virus (strain Ankara) (VACV).